An 86-amino-acid polypeptide reads, in one-letter code: Large ribosomal subunit protein bL31B (86 aa).

The protein belongs to the bacterial ribosomal protein bL31 family. Type B subfamily. As to quaternary structure, part of the 50S ribosomal subunit.

The polypeptide is Large ribosomal subunit protein bL31B (Salmonella paratyphi A (strain ATCC 9150 / SARB42)).